The following is a 367-amino-acid chain: UDP-N-acetylglucosamine--N-acetylmuramyl-(pentapeptide) pyrophosphoryl-undecaprenol N-acetylglucosamine transferase (367 aa).

UDP-N-acetyl-alpha-D-glucosamine contacts are provided by residues 11–13 (TAG), asparagine 125, arginine 163, serine 197, and glutamine 289.

Belongs to the glycosyltransferase 28 family. MurG subfamily.

The protein resides in the cell membrane. It catalyses the reaction di-trans,octa-cis-undecaprenyl diphospho-N-acetyl-alpha-D-muramoyl-L-alanyl-D-glutamyl-meso-2,6-diaminopimeloyl-D-alanyl-D-alanine + UDP-N-acetyl-alpha-D-glucosamine = di-trans,octa-cis-undecaprenyl diphospho-[N-acetyl-alpha-D-glucosaminyl-(1-&gt;4)]-N-acetyl-alpha-D-muramoyl-L-alanyl-D-glutamyl-meso-2,6-diaminopimeloyl-D-alanyl-D-alanine + UDP + H(+). Its pathway is cell wall biogenesis; peptidoglycan biosynthesis. Cell wall formation. Catalyzes the transfer of a GlcNAc subunit on undecaprenyl-pyrophosphoryl-MurNAc-pentapeptide (lipid intermediate I) to form undecaprenyl-pyrophosphoryl-MurNAc-(pentapeptide)GlcNAc (lipid intermediate II). This is UDP-N-acetylglucosamine--N-acetylmuramyl-(pentapeptide) pyrophosphoryl-undecaprenol N-acetylglucosamine transferase from Clavibacter michiganensis subsp. michiganensis (strain NCPPB 382).